Consider the following 342-residue polypeptide: UDP-3-O-acylglucosamine N-acyltransferase (342 aa).

His-253 acts as the Proton acceptor in catalysis.

This sequence belongs to the transferase hexapeptide repeat family. LpxD subfamily. As to quaternary structure, homotrimer.

The enzyme catalyses a UDP-3-O-[(3R)-3-hydroxyacyl]-alpha-D-glucosamine + a (3R)-hydroxyacyl-[ACP] = a UDP-2-N,3-O-bis[(3R)-3-hydroxyacyl]-alpha-D-glucosamine + holo-[ACP] + H(+). It participates in bacterial outer membrane biogenesis; LPS lipid A biosynthesis. Its function is as follows. Catalyzes the N-acylation of UDP-3-O-acylglucosamine using 3-hydroxyacyl-ACP as the acyl donor. Is involved in the biosynthesis of lipid A, a phosphorylated glycolipid that anchors the lipopolysaccharide to the outer membrane of the cell. The polypeptide is UDP-3-O-acylglucosamine N-acyltransferase (Rickettsia canadensis (strain McKiel)).